A 408-amino-acid chain; its full sequence is tRNA-specific 2-thiouridylase MnmA (408 aa).

Residues 20–27 (AMSGGVDS) and leucine 46 contribute to the ATP site. Catalysis depends on cysteine 114, which acts as the Nucleophile. Cysteines 114 and 210 form a disulfide. ATP is bound at residue glycine 138. The interaction with tRNA stretch occupies residues 160 to 162 (RDQ). Cysteine 210 (cysteine persulfide intermediate) is an active-site residue.

Belongs to the MnmA/TRMU family.

The protein localises to the cytoplasm. It catalyses the reaction S-sulfanyl-L-cysteinyl-[protein] + uridine(34) in tRNA + AH2 + ATP = 2-thiouridine(34) in tRNA + L-cysteinyl-[protein] + A + AMP + diphosphate + H(+). In terms of biological role, catalyzes the 2-thiolation of uridine at the wobble position (U34) of tRNA, leading to the formation of s(2)U34. The polypeptide is tRNA-specific 2-thiouridylase MnmA (Bartonella quintana (strain Toulouse) (Rochalimaea quintana)).